A 282-amino-acid chain; its full sequence is Bifunctional protein FolD (282 aa).

NADP(+) contacts are provided by residues Gly164–Ser166 and Ser189.

This sequence belongs to the tetrahydrofolate dehydrogenase/cyclohydrolase family. Homodimer.

It catalyses the reaction (6R)-5,10-methylene-5,6,7,8-tetrahydrofolate + NADP(+) = (6R)-5,10-methenyltetrahydrofolate + NADPH. It carries out the reaction (6R)-5,10-methenyltetrahydrofolate + H2O = (6R)-10-formyltetrahydrofolate + H(+). It functions in the pathway one-carbon metabolism; tetrahydrofolate interconversion. Functionally, catalyzes the oxidation of 5,10-methylenetetrahydrofolate to 5,10-methenyltetrahydrofolate and then the hydrolysis of 5,10-methenyltetrahydrofolate to 10-formyltetrahydrofolate. The chain is Bifunctional protein FolD from Lactobacillus gasseri (strain ATCC 33323 / DSM 20243 / BCRC 14619 / CIP 102991 / JCM 1131 / KCTC 3163 / NCIMB 11718 / NCTC 13722 / AM63).